A 119-amino-acid chain; its full sequence is Microtubule nucleation factor SSNA1 (119 aa).

At threonine 2 the chain carries N-acetylthreonine. Positions 2 to 32 (TQQGAALQNYNNELVKCIEELCQKREELCRQ) are important for localization to the centrosome. Residues 13 to 70 (NELVKCIEELCQKREELCRQIQQEEDEKQRLQNEVRQLTEKLARVNENLARKIASRNE) adopt a coiled-coil conformation.

This sequence belongs to the SSNA1 family. As to quaternary structure, self-associates to form fibrils. Also forms dimers as well as monomers. Interacts with SPAST.

It is found in the nucleus. The protein resides in the cytoplasm. The protein localises to the cytoskeleton. It localises to the microtubule organizing center. Its subcellular location is the centrosome. It is found in the centriole. The protein resides in the midbody. The protein localises to the flagellum basal body. It localises to the flagellum axoneme. Its subcellular location is the cell projection. It is found in the axon. In terms of biological role, microtubule-binding protein which stabilizes dynamic microtubules by slowing growth and shrinkage at both plus and minus ends and serves as a sensor of microtubule damage, protecting microtubules from the microtubule-severing enzyme SPAST. Induces microtubule branching which is mediated by the formation of long SSNA1 fibrils which guide microtubule protofilaments to split apart from the mother microtubule and form daughter microtubules. Plays a role in axon outgrowth and branching. Required for cell division. In Mus musculus (Mouse), this protein is Microtubule nucleation factor SSNA1.